The primary structure comprises 1081 residues: Carbamoyl phosphate synthase large chain (1081 aa).

The segment at 1–403 (MPRRNDLNKI…SFQKALRSLE (403 aa)) is carboxyphosphate synthetic domain. Residues Arg129, Arg170, Gly177, Lys209, Leu211, Glu216, Gly242, Val243, His244, Gln286, and Glu300 each contribute to the ATP site. The ATP-grasp 1 domain occupies 133–329 (KEAMARIGVP…IAKFAAKLAV (197 aa)). 3 residues coordinate Mg(2+): Gln286, Glu300, and Asn302. Mn(2+) contacts are provided by Gln286, Glu300, and Asn302. Residues 404–553 (TGRFGFGCDR…STYEPEECEV (150 aa)) are oligomerization domain. Residues 554–944 (LPSDKPKVMI…AFAKAELGAG (391 aa)) are carbamoyl phosphate synthetic domain. The 193-residue stretch at 686 to 878 (EKILHELEIS…LAKIASLVMS (193 aa)) folds into the ATP-grasp 2 domain. ATP is bound by residues Arg722, Lys761, Leu763, Glu768, Gly794, Ile795, His796, Ser797, Gln837, and Glu849. Residues Gln837, Glu849, and Asn851 each contribute to the Mg(2+) site. Positions 837, 849, and 851 each coordinate Mn(2+). The 137-residue stretch at 945–1081 (VILATTGTVF…DVKALQDYLG (137 aa)) folds into the MGS-like domain. The segment at 945–1081 (VILATTGTVF…DVKALQDYLG (137 aa)) is allosteric domain.

Belongs to the CarB family. As to quaternary structure, composed of two chains; the small (or glutamine) chain promotes the hydrolysis of glutamine to ammonia, which is used by the large (or ammonia) chain to synthesize carbamoyl phosphate. Tetramer of heterodimers (alpha,beta)4. Requires Mg(2+) as cofactor. Mn(2+) is required as a cofactor.

It catalyses the reaction hydrogencarbonate + L-glutamine + 2 ATP + H2O = carbamoyl phosphate + L-glutamate + 2 ADP + phosphate + 2 H(+). The enzyme catalyses hydrogencarbonate + NH4(+) + 2 ATP = carbamoyl phosphate + 2 ADP + phosphate + 2 H(+). It participates in amino-acid biosynthesis; L-arginine biosynthesis; carbamoyl phosphate from bicarbonate: step 1/1. The protein operates within pyrimidine metabolism; UMP biosynthesis via de novo pathway; (S)-dihydroorotate from bicarbonate: step 1/3. Large subunit of the glutamine-dependent carbamoyl phosphate synthetase (CPSase). CPSase catalyzes the formation of carbamoyl phosphate from the ammonia moiety of glutamine, carbonate, and phosphate donated by ATP, constituting the first step of 2 biosynthetic pathways, one leading to arginine and/or urea and the other to pyrimidine nucleotides. The large subunit (synthetase) binds the substrates ammonia (free or transferred from glutamine from the small subunit), hydrogencarbonate and ATP and carries out an ATP-coupled ligase reaction, activating hydrogencarbonate by forming carboxy phosphate which reacts with ammonia to form carbamoyl phosphate. The polypeptide is Carbamoyl phosphate synthase large chain (Synechocystis sp. (strain ATCC 27184 / PCC 6803 / Kazusa)).